A 269-amino-acid polypeptide reads, in one-letter code: HTH-type transcriptional regulator Rv0792c (269 aa).

Positions Val-20–Pro-88 constitute an HTH gntR-type domain. Positions Glu-48 to Gly-67 form a DNA-binding region, H-T-H motif.

In terms of assembly, homodimer.

Its activity is regulated as follows. DNA-binding activity is increased in the presence of L-arabinose and inhibited by the small molecule I-OMe-Tyrphostin. Transcriptional regulator required for survival in oxidative stress and for establishing infection in host tissues. Regulates the expression of a subset of genes involved in oxidative stress adaptation and virulence, enabling the bacteria to adapt and persist in host tissues. The polypeptide is HTH-type transcriptional regulator Rv0792c (Mycobacterium tuberculosis (strain ATCC 25618 / H37Rv)).